Here is a 329-residue protein sequence, read N- to C-terminus: MNNLNSVFDYEDIQLIPNKCVINSRSEADTSVKLGNYTFKLPVVPANMQTIIDDKIAEMLAKEGYFYIMHRFEAENRAAFIKKMHKDGLIASISVGVKADEHAFIREISAEALIPEFITIDIAHGHADSVIKTIQLIKRLMPQTFVIAGNVGTPEAVRELENAGADATKVGIGPGKVCITKVKTGFGTGGWQLAAVKWCAKAASKPVIADGGIRTHGDVAKSIRMGATMVMVGSLFAAHEESPGQTVERDGQLFKEYFGSASEYQKGEHKNVEGKKILLPHKGSLKDTLKEMEEDLQSSISYAGGRDLSALTKVDYVVVKNSIWNGDAI.

The active-site Thioimidate intermediate is the cysteine 178. Valine 207–valine 230 provides a ligand contact to NADP(+).

Belongs to the IMPDH/GMPR family. GuaC type 2 subfamily.

The catalysed reaction is IMP + NH4(+) + NADP(+) = GMP + NADPH + 2 H(+). Its function is as follows. Catalyzes the irreversible NADPH-dependent deamination of GMP to IMP. It functions in the conversion of nucleobase, nucleoside and nucleotide derivatives of G to A nucleotides, and in maintaining the intracellular balance of A and G nucleotides. The polypeptide is GMP reductase (Lactococcus lactis subsp. cremoris (strain MG1363)).